The chain runs to 404 residues: Acetate kinase (404 aa).

N8 contributes to the Mg(2+) binding site. K15 provides a ligand contact to ATP. R92 contacts substrate. The active-site Proton donor/acceptor is D149. Residues 207–211 (HLGSG), 282–284 (DMR), and 327–331 (GIGEN) contribute to the ATP site. Position 378 (E378) interacts with Mg(2+).

Belongs to the acetokinase family. As to quaternary structure, homodimer. Requires Mg(2+) as cofactor. It depends on Mn(2+) as a cofactor.

The protein resides in the cytoplasm. It carries out the reaction acetate + ATP = acetyl phosphate + ADP. The protein operates within metabolic intermediate biosynthesis; acetyl-CoA biosynthesis; acetyl-CoA from acetate: step 1/2. Its function is as follows. Catalyzes the formation of acetyl phosphate from acetate and ATP. Can also catalyze the reverse reaction. The protein is Acetate kinase of Nitrobacter hamburgensis (strain DSM 10229 / NCIMB 13809 / X14).